A 936-amino-acid chain; its full sequence is Protein NNF2 (936 aa).

At 1 to 41 (MEEQFTNQKKVSHLQSLMNTKRSEQPTEFAKKHRFKDTLAL) the chain is on the lumenal side. Lys-10 participates in a covalent cross-link: Glycyl lysine isopeptide (Lys-Gly) (interchain with G-Cter in ubiquitin). A helical membrane pass occupies residues 42 to 62 (FLVFLSFNHFTSLCLLVSFIV). Residues 63-120 (ATKCKDFLANCFIILFLSKKPSRHIGEVAHIDISTSKVTNGSSNRKSNSRFFGNSKNS) lie on the Cytoplasmic side of the membrane. Residues 121–141 (FVIPIPVLICEILFAMLLKIY) form a helical membrane-spanning segment. Over 142–245 (GGDYFVKPIK…FKMLGKHSDS (104 aa)) the chain is Lumenal. The helical transmembrane segment at 246 to 266 (MIYYLSFHILFFSFASSLLHP) threads the bilayer. Over 267–936 (HRQTAENKPL…NIHSLIGNSY (670 aa)) the chain is Cytoplasmic. Disordered stretches follow at residues 297 to 351 (RISS…SNIL), 387 to 437 (GSNS…DFFS), and 512 to 533 (TSEN…QEKH). Positions 299–308 (SSSSSVSADS) are enriched in low complexity. Positions 325–351 (LSSSNQTIHPSQQNNSPVPLSSHSNIL) are enriched in polar residues. Composition is skewed to low complexity over residues 394–405 (TTTTSTTTSPTT) and 414–428 (SLSN…SNGN). A compositionally biased stretch (polar residues) spans 512–529 (TSENSLTPTNSNTSYVSN).

It is found in the endoplasmic reticulum membrane. In Saccharomyces cerevisiae (strain ATCC 204508 / S288c) (Baker's yeast), this protein is Protein NNF2 (NNF2).